We begin with the raw amino-acid sequence, 158 residues long: 2-C-methyl-D-erythritol 2,4-cyclodiphosphate synthase (158 aa).

Asp9 and His11 together coordinate a divalent metal cation. Residues 9-11 (DVH) and 35-36 (HS) each bind 4-CDP-2-C-methyl-D-erythritol 2-phosphate. His43 is an a divalent metal cation binding site. Residues 57–59 (DIG), 62–66 (FPDTD), 101–107 (AQRPKMA), 133–136 (TTTE), Phe140, and Arg143 each bind 4-CDP-2-C-methyl-D-erythritol 2-phosphate.

It belongs to the IspF family. As to quaternary structure, homotrimer. A divalent metal cation is required as a cofactor.

The catalysed reaction is 4-CDP-2-C-methyl-D-erythritol 2-phosphate = 2-C-methyl-D-erythritol 2,4-cyclic diphosphate + CMP. It functions in the pathway isoprenoid biosynthesis; isopentenyl diphosphate biosynthesis via DXP pathway; isopentenyl diphosphate from 1-deoxy-D-xylulose 5-phosphate: step 4/6. In terms of biological role, involved in the biosynthesis of isopentenyl diphosphate (IPP) and dimethylallyl diphosphate (DMAPP), two major building blocks of isoprenoid compounds. Catalyzes the conversion of 4-diphosphocytidyl-2-C-methyl-D-erythritol 2-phosphate (CDP-ME2P) to 2-C-methyl-D-erythritol 2,4-cyclodiphosphate (ME-CPP) with a corresponding release of cytidine 5-monophosphate (CMP). In Lysinibacillus sphaericus (strain C3-41), this protein is 2-C-methyl-D-erythritol 2,4-cyclodiphosphate synthase.